A 1076-amino-acid chain; its full sequence is Envelopment polyprotein (1076 aa).

A signal peptide spans 1–18 (MIVPIVLFLTLCPSELSA). Over 19–455 (WGSPGDPIVC…NPQCYPVKKW (437 aa)) the chain is Lumenal. Disulfide bonds link Cys-28–Cys-51, Cys-145–Cys-158, Cys-182–Cys-329, Cys-208–Cys-218, Cys-260–Cys-307, Cys-289–Cys-294, Cys-351–Cys-354, Cys-358–Cys-426, and Cys-378–Cys-383. Residues 456-476 (LFLVVVIMCCYCALMLLTNIL) traverse the membrane as a helical segment. The interval 477 to 523 (RAIGVWGTWVFAPIKLALALGLRLAKLSKKGLVAVVTRGQMIVNDEL) is golgi retention signal. Residues 477 to 539 (RAIGVWGTWV…RGEQNEGRQG (63 aa)) lie on the Cytoplasmic side of the membrane. The segment at 544 to 566 (GPIRHWLYSPALILILTTSICSG) is internal signal sequence for glycoprotein C. Cystine bridges form between Cys-567–Cys-608, Cys-580–Cys-590, Cys-633–Cys-729, Cys-648–Cys-845, Cys-654–Cys-702, Cys-660–Cys-709, Cys-664–Cys-691, Cys-695–Cys-700, Cys-782–Cys-797, and Cys-813–Cys-827. Over 567–1040 (CDELVHAESK…ALFGDGITRW (474 aa)) the chain is Lumenal. Residues 654–660 (CRWAGDC) are fusion loop. The tract at residues 695-709 (CGGAACGCFNAAPSC) is fusion loop. N-linked (GlcNAc...) asparagine; by host glycosylation is found at Asn-857 and Asn-918. Disulfide bonds link Cys-912–Cys-982 and Cys-922–Cys-925. A glycan (N-linked (GlcNAc...) asparagine; by host) is linked at Asn-940. The chain crosses the membrane as a helical span at residues 1041–1061 (ILGIIGVLLACVMLFVVVVAI). Topologically, residues 1062 to 1076 (TRRLIKGLTQRAKVA) are cytoplasmic.

The protein belongs to the phlebovirus envelope glycoprotein family. Heterodimer with glycoprotein C. As to quaternary structure, heterodimer with glycoprotein N. Homotrimer (postfusion). Post-translationally, specific enzymatic cleavages in vivo yield mature proteins Glycoprotein C, and Glycoprotein N. Glycosylated. In terms of processing, palmitoylated.

It localises to the virion membrane. The protein localises to the host Golgi apparatus membrane. Its subcellular location is the host endoplasmic reticulum membrane. Its function is as follows. Structural component of the virion that interacts with glycoprotein C. It shields the hydrophobic fusion loops of the glycoprotein C, preventing premature fusion. The glycoprotein protrusions are arranged on an icosahedral lattice, with T=12 triangulation. They are able to attach the virion to the host cell receptor CD209/DC-SIGN and to promote fusion of membranes with the late endosome after endocytosis of the virion. Plays a role in the packaging of ribonucleoproteins during virus assembly. In terms of biological role, structural component of the virion that interacts with glycoprotein N. Acts as a class II fusion protein that is activated upon acidification and subsequent repositioning of the glycoprotein N. The glycoprotein protrusions are arranged on an icosahedral lattice, with T=12 triangulation. They are able to attach the virion to the host cell receptor CD209/DC-SIGN and to promote fusion of membranes with the late endosome after endocytosis of the virion. In Alces americanus (American moose), this protein is Envelopment polyprotein (GP).